The sequence spans 272 residues: Dermonecrotic toxin SpeSicTox-betaIB2b (272 aa).

The active site involves histidine 5. Mg(2+) is bound by residues glutamate 25 and aspartate 27. Catalysis depends on histidine 41, which acts as the Nucleophile. Cystine bridges form between cysteine 45–cysteine 51 and cysteine 47–cysteine 191. Residue aspartate 85 participates in Mg(2+) binding.

This sequence belongs to the arthropod phospholipase D family. Class II subfamily. The cofactor is Mg(2+). As to expression, expressed by the venom gland.

It localises to the secreted. It catalyses the reaction an N-(acyl)-sphingosylphosphocholine = an N-(acyl)-sphingosyl-1,3-cyclic phosphate + choline. It carries out the reaction an N-(acyl)-sphingosylphosphoethanolamine = an N-(acyl)-sphingosyl-1,3-cyclic phosphate + ethanolamine. The enzyme catalyses a 1-acyl-sn-glycero-3-phosphocholine = a 1-acyl-sn-glycero-2,3-cyclic phosphate + choline. The catalysed reaction is a 1-acyl-sn-glycero-3-phosphoethanolamine = a 1-acyl-sn-glycero-2,3-cyclic phosphate + ethanolamine. In terms of biological role, dermonecrotic toxins cleave the phosphodiester linkage between the phosphate and headgroup of certain phospholipids (sphingolipid and lysolipid substrates), forming an alcohol (often choline) and a cyclic phosphate. This toxin acts on sphingomyelin (SM). It may also act on ceramide phosphoethanolamine (CPE), lysophosphatidylcholine (LPC) and lysophosphatidylethanolamine (LPE), but not on lysophosphatidylserine (LPS), and lysophosphatidylglycerol (LPG). It acts by transphosphatidylation, releasing exclusively cyclic phosphate products as second products. Induces dermonecrosis, hemolysis, increased vascular permeability, edema, inflammatory response, and platelet aggregation. This is Dermonecrotic toxin SpeSicTox-betaIB2b from Sicarius peruensis (Six-eyed sand spider).